Here is a 156-residue protein sequence, read N- to C-terminus: uncharacterized protein (156 aa).

The 147-residue stretch at 10 to 156 (VAARTFPLAC…NDYVMVRELV (147 aa)) folds into the N-acetyltransferase domain.

Belongs to the acetyltransferase family.

This is an uncharacterized protein from Mycobacterium bovis (strain ATCC BAA-935 / AF2122/97).